A 513-amino-acid polypeptide reads, in one-letter code: ATP synthase subunit alpha (513 aa).

169-176 (GDRQTGKS) contributes to the ATP binding site.

This sequence belongs to the ATPase alpha/beta chains family. F-type ATPases have 2 components, CF(1) - the catalytic core - and CF(0) - the membrane proton channel. CF(1) has five subunits: alpha(3), beta(3), gamma(1), delta(1), epsilon(1). CF(0) has three main subunits: a(1), b(2) and c(9-12). The alpha and beta chains form an alternating ring which encloses part of the gamma chain. CF(1) is attached to CF(0) by a central stalk formed by the gamma and epsilon chains, while a peripheral stalk is formed by the delta and b chains.

Its subcellular location is the cell membrane. The catalysed reaction is ATP + H2O + 4 H(+)(in) = ADP + phosphate + 5 H(+)(out). Functionally, produces ATP from ADP in the presence of a proton gradient across the membrane. The alpha chain is a regulatory subunit. The protein is ATP synthase subunit alpha of Baumannia cicadellinicola subsp. Homalodisca coagulata.